The sequence spans 145 residues: D-aminoacyl-tRNA deacylase (145 aa).

Positions 137–138 (GP) match the Gly-cisPro motif, important for rejection of L-amino acids motif.

This sequence belongs to the DTD family. In terms of assembly, homodimer.

It is found in the cytoplasm. It carries out the reaction glycyl-tRNA(Ala) + H2O = tRNA(Ala) + glycine + H(+). The catalysed reaction is a D-aminoacyl-tRNA + H2O = a tRNA + a D-alpha-amino acid + H(+). In terms of biological role, an aminoacyl-tRNA editing enzyme that deacylates mischarged D-aminoacyl-tRNAs. Also deacylates mischarged glycyl-tRNA(Ala), protecting cells against glycine mischarging by AlaRS. Acts via tRNA-based rather than protein-based catalysis; rejects L-amino acids rather than detecting D-amino acids in the active site. By recycling D-aminoacyl-tRNA to D-amino acids and free tRNA molecules, this enzyme counteracts the toxicity associated with the formation of D-aminoacyl-tRNA entities in vivo and helps enforce protein L-homochirality. The sequence is that of D-aminoacyl-tRNA deacylase from Escherichia coli O81 (strain ED1a).